Here is a 174-residue protein sequence, read N- to C-terminus: RNA pyrophosphohydrolase (174 aa).

The region spanning G6–S149 is the Nudix hydrolase domain. Positions G38–G59 match the Nudix box motif.

Belongs to the Nudix hydrolase family. RppH subfamily. Requires a divalent metal cation as cofactor.

Its function is as follows. Accelerates the degradation of transcripts by removing pyrophosphate from the 5'-end of triphosphorylated RNA, leading to a more labile monophosphorylated state that can stimulate subsequent ribonuclease cleavage. In Chromobacterium violaceum (strain ATCC 12472 / DSM 30191 / JCM 1249 / CCUG 213 / NBRC 12614 / NCIMB 9131 / NCTC 9757 / MK), this protein is RNA pyrophosphohydrolase.